The following is a 198-amino-acid chain: Heme oxygenase PigA (198 aa).

His26 serves as a coordination point for heme b.

It belongs to the heme oxygenase family.

The enzyme catalyses heme b + 3 AH2 + 3 O2 + 2 H(+) = biliverdin IXbeta + CO + Fe(2+) + 3 A + 3 H2O. The catalysed reaction is heme b + 3 AH2 + 3 O2 + 3 H(+) = biliverdin IXdelta + CO + Fe(2+) + 3 A + 3 H2O. Its function is as follows. Involved in heme degradation. Catalyzes the degradation of heme to biliverdin, with the release of iron. Forms biliverdin delta (70%) and beta (30%). Under anaerobic conditions ferredoxin--NADP(+) reductase (fpr) can provide the necessary electrons; Bfd is not required. The polypeptide is Heme oxygenase PigA (Pseudomonas aeruginosa (strain ATCC 15692 / DSM 22644 / CIP 104116 / JCM 14847 / LMG 12228 / 1C / PRS 101 / PAO1)).